We begin with the raw amino-acid sequence, 326 residues long: Ras association domain-containing protein 2 (326 aa).

Residues 176–264 form the Ras-associating domain; the sequence is YNHKTSVFTP…SKVFLMEKDQ (89 aa). Positions 272–319 constitute an SARAH domain; sequence VAQYIKFEMPVLKSFIQKLQEEEDREVEKLMQKYTVLRLMIRQRLEEI.

As to quaternary structure, interacts directly with activated KRAS in a GTP-dependent manner. Interacts (via SARAH domain) with STK3/MST2 and STK4/MST1. Post-translationally, phosphorylated by STK3/MST2 and STK4/MST1.

It is found in the nucleus. The protein localises to the cytoplasm. The protein resides in the chromosome. It localises to the centromere. Its subcellular location is the kinetochore. Functionally, potential tumor suppressor. Acts as a KRAS-specific effector protein. May promote apoptosis and cell cycle arrest. Stabilizes STK3/MST2 by protecting it from proteasomal degradation. This chain is Ras association domain-containing protein 2 (Rassf2), found in Rattus norvegicus (Rat).